The primary structure comprises 846 residues: MSSSHFASRHRKDISTEMIRTKIAHRKSLSQKENRHKEYERNRHFGLKDVNIPTLEGRILVELDETSQGLVPEKTNVKPRAMKTILGDQRKQMLQKYKEEKQLQKLKEQREKAKRGIFKVGRYRPDMPCFLLSNQNAVKAEPKKAIPSSVRITRSKAKDQMEQTKIDNESDVRAIRPGPRQTSEKKVSDKEKKVVQPVMPTSLRMTRSATQAAKQVPRTVSSTTARKPVTRAANENEPEGKVPSKGRPAKNVETKPDKGISCKVDSEENTLNSQTNATSGMNPDGVLSKMENLPEINTAKIKGKNSFAPKDFMFQPLDGLKTYQVTPMTPRSANAFLTPSYTWTPLKTEVDESQATKEILAQKCKTYSTKTIQQDSNKLPCPLGPLTVWHEEHVLNKNEATTKNLNGLPIKEVPSLERNEGRIAQPHHGVPYFRNILQSETEKLTSHCFEWDRKLELDIPDDAKDLIRTAVGQTRLLMKERFKQFEGLVDDCEYKRGIKETTCTDLDGFWDMVSFQIEDVIHKFNNLIKLEESGWQVNNNMNHNMNKNVFRKKVVSGIASKPKQDDAGRIAARNRLAAIKNAMRERIRQEECAETAVSVIPKEVDKIVFDAGFFRVESPVKLFSGLSVSSEGPSQRLGTPKSVNKAVSQSRNEMGIPQQTTSPENAGPQNTKSEHVKKTLFLSIPESRSSIEDAQCPGLPDLIEENHVVNKTDLKVDCLSSERMSLPLLAGGVADDINTNKKEGISDVVEGMELNSSITSQDVLMSSPEKNTASQNSILEEGETKISQSELFDNKSLTTECHLLDSPGLNCSNPFTQLERRHQEHARHISFGGNLITFSPLQPGEF.

Position 67 is a phosphoserine; by CDK1 (Ser67). Residues 90–120 are a coiled coil; that stretch reads RKQMLQKYKEEKQLQKLKEQREKAKRGIFKV. The disordered stretch occupies residues 153–284; it reads TRSKAKDQME…TNATSGMNPD (132 aa). Composition is skewed to basic and acidic residues over residues 156-174 and 182-194; these read KAKD…DVRA and TSEK…EKKV. A Phosphoserine modification is found at Ser202. The segment covering 203-225 has biased composition (polar residues); that stretch reads LRMTRSATQAAKQVPRTVSSTTA. Positions 250-266 are enriched in basic and acidic residues; the sequence is KNVETKPDKGISCKVDS. Polar residues predominate over residues 269–281; that stretch reads NTLNSQTNATSGM. Thr326 is modified (phosphothreonine). At Thr329 the chain carries Phosphothreonine; by CDK1. Thr338 carries the post-translational modification Phosphothreonine. Lys347 is covalently cross-linked (Glycyl lysine isopeptide (Lys-Gly) (interchain with G-Cter in SUMO2)). A phosphothreonine; by CDK1 mark is found at Thr401 and Thr402. Ser618 carries the post-translational modification Phosphoserine; by CDK1. Residue Ser627 is modified to Phosphoserine; by AURKA. The segment covering 628–671 has biased composition (polar residues); the sequence is VSSEGPSQRLGTPKSVNKAVSQSRNEMGIPQQTTSPENAGPQNT. The disordered stretch occupies residues 628–674; the sequence is VSSEGPSQRLGTPKSVNKAVSQSRNEMGIPQQTTSPENAGPQNTKSE. A phosphoserine mark is found at Ser629 and Ser634. Thr639 is modified (phosphothreonine; by CDK1). At Ser642 the chain carries Phosphoserine; by CDK1. A Phosphoserine modification is found at Ser662. Phosphoserine; by AURKA is present on residues Ser725 and Ser757. The residue at position 759 (Thr759) is a Phosphothreonine; by CDK1. Ser774 and Ser777 each carry phosphoserine. Thr784 bears the Phosphothreonine mark. Ser806 and Ser812 each carry phosphoserine. Ser830 is subject to Phosphoserine; by AURKA. Ser839 carries the post-translational modification Phosphoserine; by CDK1.

This sequence belongs to the SAPAP family. In terms of assembly, interacts with CDK1. Interacts with the C-terminal proline-rich region of FBXO7. Recruited by FBXO7 to a SCF (SKP1-CUL1-F-box) protein complex in a CDK1/Cyclin B-phosphorylation dependent manner. Interacts with CDH1. Post-translationally, ubiquitinated, leading to its degradation. Decreased phosphorylation levels are associated with the differentiation of intestinal epithelial cells. In terms of tissue distribution, abundantly expressed in fetal liver. Expressed at lower levels in bone marrow, testis, colon, and placenta.

Its subcellular location is the nucleus. It is found in the cytoplasm. The protein resides in the cytoskeleton. The protein localises to the spindle. Its function is as follows. Potential cell cycle regulator that may play a role in carcinogenesis of cancer cells. Mitotic phosphoprotein regulated by the ubiquitin-proteasome pathway. Key regulator of adherens junction integrity and differentiation that may be involved in CDH1-mediated adhesion and signaling in epithelial cells. The sequence is that of Disks large-associated protein 5 (DLGAP5) from Homo sapiens (Human).